A 101-amino-acid polypeptide reads, in one-letter code: Guanyl-specific ribonuclease Po1 (101 aa).

Gln-1 is modified (pyrrolidone carboxylic acid). Disulfide bonds link Cys-7/Cys-84, Cys-9/Cys-99, and Cys-48/Cys-82. His-36 is a catalytic residue. Glu-54 serves as the catalytic Proton acceptor. Residue His-87 is the Proton donor of the active site.

Belongs to the ribonuclease N1/T1 family.

It carries out the reaction [RNA] containing guanosine + H2O = an [RNA fragment]-3'-guanosine-3'-phosphate + a 5'-hydroxy-ribonucleotide-3'-[RNA fragment].. Inhibited by divalent cations. Inhibition decreases in the order zinc, lead, cadmium, nickel, mercury. The protein is Guanyl-specific ribonuclease Po1 of Pleurotus ostreatus (Oyster mushroom).